Reading from the N-terminus, the 250-residue chain is Tetrahydromethanopterin S-methyltransferase subunit D (250 aa).

A run of 6 helical transmembrane segments spans residues isoleucine 9–valine 29, glycine 47–methionine 67, isoleucine 86–valine 106, isoleucine 144–valine 164, leucine 184–serine 204, and leucine 230–isoleucine 250.

The protein belongs to the MtrD family. In terms of assembly, the complex is composed of 8 subunits; MtrA, MtrB, MtrC, MtrD, MtrE, MtrF, MtrG and MtrH.

The protein resides in the cell membrane. The enzyme catalyses 5-methyl-5,6,7,8-tetrahydromethanopterin + coenzyme M + 2 Na(+)(in) = 5,6,7,8-tetrahydromethanopterin + methyl-coenzyme M + 2 Na(+)(out). It functions in the pathway one-carbon metabolism; methanogenesis from CO(2); methyl-coenzyme M from 5,10-methylene-5,6,7,8-tetrahydromethanopterin: step 2/2. Functionally, part of a complex that catalyzes the formation of methyl-coenzyme M and tetrahydromethanopterin from coenzyme M and methyl-tetrahydromethanopterin. This is an energy-conserving, sodium-ion translocating step. This chain is Tetrahydromethanopterin S-methyltransferase subunit D, found in Methanosarcina barkeri (strain Fusaro / DSM 804).